The chain runs to 239 residues: tRNA uridine(34) hydroxylase (239 aa).

The Rhodanese domain maps to 124–214; that stretch reads QGRELVMLDT…GILKYFEETD (91 aa). The active-site Cysteine persulfide intermediate is the C178.

It belongs to the TrhO family.

It carries out the reaction uridine(34) in tRNA + AH2 + O2 = 5-hydroxyuridine(34) in tRNA + A + H2O. In terms of biological role, catalyzes oxygen-dependent 5-hydroxyuridine (ho5U) modification at position 34 in tRNAs. This chain is tRNA uridine(34) hydroxylase, found in Bordetella parapertussis (strain 12822 / ATCC BAA-587 / NCTC 13253).